A 236-amino-acid polypeptide reads, in one-letter code: Lectin (236 aa).

A glycan (N-linked (GlcNAc...) asparagine) is linked at N118.

Belongs to the leguminous lectin family. Homodimer of noncovalently associated chains.

In terms of biological role, D-mannose and D-glucose specific lectin. This chain is Lectin, found in Onobrychis viciifolia (Common sainfoin).